We begin with the raw amino-acid sequence, 374 residues long: Ribosomal RNA large subunit methyltransferase G (374 aa).

The protein belongs to the methyltransferase superfamily. RlmG family.

The protein localises to the cytoplasm. The enzyme catalyses guanosine(1835) in 23S rRNA + S-adenosyl-L-methionine = N(2)-methylguanosine(1835) in 23S rRNA + S-adenosyl-L-homocysteine + H(+). In terms of biological role, specifically methylates the guanine in position 1835 (m2G1835) of 23S rRNA. The polypeptide is Ribosomal RNA large subunit methyltransferase G (Pseudomonas aeruginosa (strain ATCC 15692 / DSM 22644 / CIP 104116 / JCM 14847 / LMG 12228 / 1C / PRS 101 / PAO1)).